We begin with the raw amino-acid sequence, 875 residues long: Translation initiation factor IF-2 (875 aa).

Disordered stretches follow at residues 123 to 204 (EKEK…EKPK) and 240 to 278 (ETKE…PVET). Residues 240-252 (ETKEEKAELEALR) show a composition bias toward basic and acidic residues. The segment covering 259-268 (PKKKKKKKKK) has biased composition (basic residues). Basic and acidic residues predominate over residues 269–278 (KEEEKAPVET). Residues 379 to 547 (ERPPVVTVMG…NILLVSEILE (169 aa)) form the tr-type G domain. The G1 stretch occupies residues 388–395 (GHVDHGKT). A GTP-binding site is contributed by 388–395 (GHVDHGKT). Positions 413-417 (GITQH) are G2. The tract at residues 435–438 (DTPG) is G3. Residues 435–439 (DTPGH) and 489–492 (NKID) contribute to the GTP site. A G4 region spans residues 489 to 492 (NKID). The segment at 525–527 (SAK) is G5.

It belongs to the TRAFAC class translation factor GTPase superfamily. Classic translation factor GTPase family. IF-2 subfamily.

The protein resides in the cytoplasm. Functionally, one of the essential components for the initiation of protein synthesis. Protects formylmethionyl-tRNA from spontaneous hydrolysis and promotes its binding to the 30S ribosomal subunits. Also involved in the hydrolysis of GTP during the formation of the 70S ribosomal complex. The protein is Translation initiation factor IF-2 of Persephonella marina (strain DSM 14350 / EX-H1).